The sequence spans 207 residues: Cytochrome c oxidase subunit 3 (207 aa).

The next 5 membrane-spanning stretches (helical) occupy residues F28 to T48, V70 to Y90, L102 to F122, L144 to I164, and W186 to V206.

Belongs to the cytochrome c oxidase subunit 3 family.

It localises to the cell membrane. The enzyme catalyses 4 Fe(II)-[cytochrome c] + O2 + 8 H(+)(in) = 4 Fe(III)-[cytochrome c] + 2 H2O + 4 H(+)(out). This is Cytochrome c oxidase subunit 3 (ctaE) from Bacillus sp. (strain PS3).